The primary structure comprises 214 residues: Ras-related protein Rab2BV (214 aa).

Gly-19 to Ser-26 is a binding site for GTP. An Effector region motif is present at residues Ser-41–Phe-49. GTP contacts are provided by residues Asp-67–Gln-71 and Asn-125–Asp-128. S-geranylgeranyl cysteine attachment occurs at residues Cys-211 and Cys-212.

Belongs to the small GTPase superfamily. Rab family.

The protein resides in the cell membrane. This chain is Ras-related protein Rab2BV (RAB2BV), found in Beta vulgaris (Sugar beet).